A 127-amino-acid chain; its full sequence is Large ribosomal subunit protein bL20 (127 aa).

It belongs to the bacterial ribosomal protein bL20 family.

Functionally, binds directly to 23S ribosomal RNA and is necessary for the in vitro assembly process of the 50S ribosomal subunit. It is not involved in the protein synthesizing functions of that subunit. The protein is Large ribosomal subunit protein bL20 (rplT) of Mycoplasma pneumoniae (strain ATCC 29342 / M129 / Subtype 1) (Mycoplasmoides pneumoniae).